The primary structure comprises 177 residues: uncharacterized protein (177 aa).

The protein belongs to the flavoredoxin family. It depends on FMN as a cofactor.

This is an uncharacterized protein from Archaeoglobus fulgidus (strain ATCC 49558 / DSM 4304 / JCM 9628 / NBRC 100126 / VC-16).